Here is a 198-residue protein sequence, read N- to C-terminus: Large ribosomal subunit protein bL25 (198 aa).

Belongs to the bacterial ribosomal protein bL25 family. CTC subfamily. In terms of assembly, part of the 50S ribosomal subunit; part of the 5S rRNA/L5/L18/L25 subcomplex. Contacts the 5S rRNA. Binds to the 5S rRNA independently of L5 and L18.

In terms of biological role, this is one of the proteins that binds to the 5S RNA in the ribosome where it forms part of the central protuberance. This Pseudomonas putida (strain W619) protein is Large ribosomal subunit protein bL25.